The following is a 179-amino-acid chain: Apolipophorin-3b (179 aa).

Residues 1-16 (MNTLLAVLMLAVAAQA) form the signal peptide. Repeats lie at residues 30-40 (VQQLNHTIVNA), 41-52 (AHELHETLGLPT), 53-60 (PDEALNLL), 61-78 (TEQA…TTSL), 79-89 (KQEAEKHQGSV), 90-99 (AEQLNRFARN), 100-113 (LNNS…SAQP), 114-127 (ADQL…LTNV), 128-140 (GHQW…RPSV), 141-151 (AQEAWAPVQSA), 152-165 (LQEA…AAAN), and 166-179 (LQNS…KPAN). N34 is a glycosylation site (N-linked (GlcNAc...) asparagine). N-linked (GlcNAc...) asparagine glycosylation is present at N101. The tract at residues 152–179 (LQEAAEKTKEAAANLQNSIQSAVQKPAN) is disordered. A compositionally biased stretch (polar residues) spans 165 to 179 (NLQNSIQSAVQKPAN).

It belongs to the insect apolipophorin-3 family. Equilibrium between a soluble monomer and a bound lipoprotein form. Apolipophorin-3 associates with lipophorin during lipid loading until each particle contains 14 molecules of apolipophorin-3 in L.migratoria (5 molecules of apolipophorin-3a and 9 of apolipophorin-3b). In terms of tissue distribution, hemolymph.

Its subcellular location is the secreted. Its function is as follows. Assists in the loading of diacylglycerol, generated from triacylglycerol stores in the fat body through the action of adipokinetic hormone, into lipophorin, the hemolymph lipoprotein. It increases the lipid carrying capacity of lipophorin by covering the expanding hydrophobic surface resulting from diacylglycerol uptake. It thus plays a critical role in the transport of lipids during flight in several species of insects. The polypeptide is Apolipophorin-3b (Locusta migratoria (Migratory locust)).